Consider the following 162-residue polypeptide: 2-C-methyl-D-erythritol 2,4-cyclodiphosphate synthase (162 aa).

Asp8 and His10 together coordinate a divalent metal cation. 4-CDP-2-C-methyl-D-erythritol 2-phosphate-binding positions include 8 to 10 and 36 to 37; these read DVH and HS. His44 lines the a divalent metal cation pocket. 4-CDP-2-C-methyl-D-erythritol 2-phosphate contacts are provided by residues 58-60, 63-67, 102-108, 134-137, Phe141, and Arg144; these read DIG, FPDTD, AQAPKMA, and TTTE.

Belongs to the IspF family. Homotrimer. Requires a divalent metal cation as cofactor.

It catalyses the reaction 4-CDP-2-C-methyl-D-erythritol 2-phosphate = 2-C-methyl-D-erythritol 2,4-cyclic diphosphate + CMP. The protein operates within isoprenoid biosynthesis; isopentenyl diphosphate biosynthesis via DXP pathway; isopentenyl diphosphate from 1-deoxy-D-xylulose 5-phosphate: step 4/6. In terms of biological role, involved in the biosynthesis of isopentenyl diphosphate (IPP) and dimethylallyl diphosphate (DMAPP), two major building blocks of isoprenoid compounds. Catalyzes the conversion of 4-diphosphocytidyl-2-C-methyl-D-erythritol 2-phosphate (CDP-ME2P) to 2-C-methyl-D-erythritol 2,4-cyclodiphosphate (ME-CPP) with a corresponding release of cytidine 5-monophosphate (CMP). This Yersinia enterocolitica serotype O:8 / biotype 1B (strain NCTC 13174 / 8081) protein is 2-C-methyl-D-erythritol 2,4-cyclodiphosphate synthase.